The sequence spans 949 residues: Glycine dehydrogenase (decarboxylating) (949 aa).

K700 is modified (N6-(pyridoxal phosphate)lysine).

This sequence belongs to the GcvP family. In terms of assembly, the glycine cleavage system is composed of four proteins: P, T, L and H. It depends on pyridoxal 5'-phosphate as a cofactor.

It catalyses the reaction N(6)-[(R)-lipoyl]-L-lysyl-[glycine-cleavage complex H protein] + glycine + H(+) = N(6)-[(R)-S(8)-aminomethyldihydrolipoyl]-L-lysyl-[glycine-cleavage complex H protein] + CO2. Its function is as follows. The glycine cleavage system catalyzes the degradation of glycine. The P protein binds the alpha-amino group of glycine through its pyridoxal phosphate cofactor; CO(2) is released and the remaining methylamine moiety is then transferred to the lipoamide cofactor of the H protein. The polypeptide is Glycine dehydrogenase (decarboxylating) (Flavobacterium johnsoniae (strain ATCC 17061 / DSM 2064 / JCM 8514 / BCRC 14874 / CCUG 350202 / NBRC 14942 / NCIMB 11054 / UW101) (Cytophaga johnsonae)).